The primary structure comprises 1410 residues: non-specific serine/threonine protein kinase (1410 aa).

Residues 27–299 form the Protein kinase domain; that stretch reads THYVSQLNNS…LLEKYRTIYF (273 aa). ATP-binding positions include 33-41 and Lys54; that span reads LNNSRFLKT. Catalysis depends on Asp147, which acts as the Proton acceptor. 5 HEAT repeats span residues 441–478, 485–525, 556–594, 596–633, and 635–672; these read TKLD…EVKH, NIFV…KANL, RKLQ…YFGR, KTND…LLGP, and TMEQ…TRFV. 3 WD repeats span residues 1037–1076, 1187–1226, and 1230–1273; these read FDGT…NEKS, ADYG…QIRA, and GESL…CKHV.

Belongs to the protein kinase superfamily. Ser/Thr protein kinase family. Component of the autophagy-specific VPS34 PI3-kinase complex I composed of VPS15, VPS30, VPS34, ATG14 and ATG38; and of the VPS34 PI3-kinase complex II composed of VPS15, VPS30, VPS34 and VPS38. In terms of processing, autophosphorylated.

It is found in the golgi apparatus. Its subcellular location is the trans-Golgi network membrane. The protein resides in the endosome membrane. It carries out the reaction L-seryl-[protein] + ATP = O-phospho-L-seryl-[protein] + ADP + H(+). The catalysed reaction is L-threonyl-[protein] + ATP = O-phospho-L-threonyl-[protein] + ADP + H(+). Serine/threonine-protein kinase that plays a role in signaling in modulation of host immune response, intracellular survival and virulence. Required for impediment of phagosomal maturation in THP-1 macrophages. Regulatory subunit of the autophagy-specific VPS34 PI3-kinase complex I essential to recruit the ATG8-phosphatidylinositol conjugate and the ATG12-ATG5 conjugate to the pre-autophagosomal structure. Within the PS34 PI3-kinase complex I, VPS15-mediated phosphorylation of VPS34 may be required for recruiting VPS34 to the membrane but not for activation of its PI3K activity. Is also involved in endosome-to-Golgi retrograde transport as part of the VPS34 PI3-kinase complex II. This second complex is required for the endosome-to-Golgi retrieval of PEP1 and KEX2, and the recruitment of VPS5 and VPS7, two components of the retromer complex, to endosomal membranes (probably through the synthesis of a specific pool of phosphatidylinositol 3-phosphate recruiting the retromer to the endosomes). By regulating VPS34 kinase activity, VPS15 appears to be essential for the efficient delivery of soluble hydrolases to the yeast vacuole. The sequence is that of non-specific serine/threonine protein kinase from Candida glabrata (strain ATCC 2001 / BCRC 20586 / JCM 3761 / NBRC 0622 / NRRL Y-65 / CBS 138) (Yeast).